The chain runs to 467 residues: H(+)/Cl(-) exchange transporter ClcA (467 aa).

The Cytoplasmic segment spans residues 1-30 (MTKRERIIQSVLVKVPKDAINQFLSHGSTP). A helical membrane pass occupies residues 31–67 (ISVLFLAALVGVLAGLVGTYFEIAVHFVSETRTEWLK). Residues 68–74 (SEIGHLL) are Periplasmic-facing. Residues 75 to 98 (PLWLAAILISAALAFVGYFLVHRF) traverse the membrane as a helical segment. The short motif at 104–108 (GSGIP) is the Selectivity filter part_1 element. Ser-105 contributes to the chloride binding site. The helical intramembrane region spans 107 to 114 (IPEIEGAM). The Cytoplasmic segment spans residues 115-121 (DNIRPVR). Helical transmembrane passes span 122–139 (WWRV…ALGS) and 146–164 (EGPT…TDIF). A Selectivity filter part_2 motif is present at residues 144-148 (GREGP). Over 165-174 (RVKDDDTRHS) the chain is Cytoplasmic. 2 consecutive intramembrane regions (helical) follow at residues 175 to 187 (LLAS…LAAA) and 191 to 199 (PLAGIMFVV). At 200–212 (EEMRPQFRYSLIS) the chain is on the cytoplasmic side. Residues 213–230 (IRAVIISAVMANIVFRAI) form a helical membrane-spanning segment. Residues 231–250 (NGQDAVITMPQYQPPELKAL) are Periplasmic-facing. The helical transmembrane segment at 251 to 279 (WLFLLLGGLFGVFGVLFNKLVTVAQDAFV) threads the bilayer. The Cytoplasmic portion of the chain corresponds to 280–285 (ALHKND). Residues 286–307 (RKRYLITGTCLGGIFGLLLLYV) traverse the membrane as a helical segment. At 308-327 (PELTGGGIHLIPDVTNGNYS) the chain is on the periplasmic side. Helical transmembrane passes span 328 to 347 (VSLL…ICFG) and 353 to 374 (GIFA…ATAK). The Selectivity filter part_3 motif lies at 353–357 (GIFAP). Chloride-binding residues include Ile-354 and Phe-355. Residues 375 to 384 (ILLPDLPIEP) lie on the Periplasmic side of the membrane. The helical intramembrane region spans 385–399 (GMFAIAGMGALFAAT). The segment at residues 400-402 (VRA) is an intramembrane region (note=Loop between two helices). The segment at residues 403-414 (PITGILLVIEMT) is an intramembrane region (helical). An intramembrane region (note=Loop between two helices) is located at residues 415–419 (NNYYL). Residues 420–436 (ILPLIITSLGAVICAQI) form a helical membrane-spanning segment. Residues 437-467 (CGGKPIYSQLLHRTIKNDKLRQQDLPEQQNS) are Cytoplasmic-facing. Tyr-443 is a chloride binding site.

The protein belongs to the chloride channel (TC 2.A.49) family. ClcA subfamily. As to quaternary structure, homodimer.

The protein resides in the cell inner membrane. It catalyses the reaction 2 chloride(in) + H(+)(out) = 2 chloride(out) + H(+)(in). Functionally, proton-coupled chloride transporter. Functions as antiport system and exchanges two chloride ions for 1 proton. Probably acts as an electrical shunt for an outwardly-directed proton pump that is linked to amino acid decarboxylation, as part of the extreme acid resistance (XAR) response. This chain is H(+)/Cl(-) exchange transporter ClcA, found in Vibrio vulnificus (strain CMCP6).